We begin with the raw amino-acid sequence, 241 residues long: Fatty acid metabolism regulator protein (241 aa).

Residues Q11–I79 form the HTH gntR-type domain. The segment at residues E39–Q58 is a DNA-binding region (H-T-H motif).

As to quaternary structure, homodimer.

The protein localises to the cytoplasm. Multifunctional regulator of fatty acid metabolism. The polypeptide is Fatty acid metabolism regulator protein (Haemophilus influenzae (strain PittEE)).